Consider the following 88-residue polypeptide: UPF0250 protein IL0958 (88 aa).

The protein belongs to the UPF0250 family.

The protein is UPF0250 protein IL0958 of Idiomarina loihiensis (strain ATCC BAA-735 / DSM 15497 / L2-TR).